Here is a 256-residue protein sequence, read N- to C-terminus: MALAKRIIPCLDVDNGRVVKGVKFENIRDAGDPVEIARRYDEQGADEITFLDITASVDGRDTTLHTVERMASQVFIPLTVGGGVRTVQDIRNLLNAGADKVSINTAAVFNPEFVGEAAQHFGSQCIVVAIDAKKVSGPGEAPRWEIFTHGGRKPTGLDAVEWAKKMEGLGAGEILLTSMDQDGMKNGFDLGVTRAISDALGIPVIASGGVGNLQHLADGIIEGHASAVLAASIFHFGEYTVPEAKAYMAQRGIVVR.

Catalysis depends on residues Asp12 and Asp131.

This sequence belongs to the HisA/HisF family. In terms of assembly, heterodimer of HisH and HisF.

The protein resides in the cytoplasm. It carries out the reaction 5-[(5-phospho-1-deoxy-D-ribulos-1-ylimino)methylamino]-1-(5-phospho-beta-D-ribosyl)imidazole-4-carboxamide + L-glutamine = D-erythro-1-(imidazol-4-yl)glycerol 3-phosphate + 5-amino-1-(5-phospho-beta-D-ribosyl)imidazole-4-carboxamide + L-glutamate + H(+). Its pathway is amino-acid biosynthesis; L-histidine biosynthesis; L-histidine from 5-phospho-alpha-D-ribose 1-diphosphate: step 5/9. In terms of biological role, IGPS catalyzes the conversion of PRFAR and glutamine to IGP, AICAR and glutamate. The HisF subunit catalyzes the cyclization activity that produces IGP and AICAR from PRFAR using the ammonia provided by the HisH subunit. The sequence is that of Imidazole glycerol phosphate synthase subunit HisF from Pseudomonas fluorescens (strain ATCC BAA-477 / NRRL B-23932 / Pf-5).